A 520-amino-acid polypeptide reads, in one-letter code: Amphoterin-induced protein 2 (520 aa).

Residues 1–37 form the signal peptide; it reads MSLRFHTLPTLPRAVKPGCRELLCLLVIAVMVSPSSS. The 30-residue stretch at 38–67 folds into the LRRNT domain; sequence GLCPTACICATDIVSCTNKNLSKVPGNLFR. Residues 38 to 398 are Extracellular-facing; the sequence is GLCPTACICA…SHHAHEAFNT (361 aa). 2 cysteine pairs are disulfide-bonded: cysteine 40-cysteine 46 and cysteine 44-cysteine 53. The N-linked (GlcNAc...) asparagine glycan is linked to asparagine 57. 6 LRR repeats span residues 68-89, 93-114, 117-138, 141-162, 165-186, and 192-213; these read LIKR…WIPV, KLST…SFST, NLKC…MFQE, VLEV…AFGG, HLQK…LYVG, and DLTF…HINL. Residue asparagine 103 is glycosylated (N-linked (GlcNAc...) asparagine). The LRRCT domain occupies 227–283; that stretch reads NPFVCDCSLYSLLTFWYRRHFNSVTDFKHDYTCRLWLDSRHSHQLLLLQDSFLNCSH. 2 cysteine pairs are disulfide-bonded: cysteine 231–cysteine 259 and cysteine 233–cysteine 281. N-linked (GlcNAc...) asparagine glycans are attached at residues asparagine 280, asparagine 287, asparagine 344, asparagine 372, asparagine 380, asparagine 383, and asparagine 387. In terms of domain architecture, Ig-like C2-type spans 288–378; that stretch reads GSFHALGFIH…RLLNETVDIM (91 aa). Cysteine 309 and cysteine 362 are disulfide-bonded. The chain crosses the membrane as a helical span at residues 399–419; that stretch reads AFTTLAACVVSIVLVLLYLYL. The Cytoplasmic portion of the chain corresponds to 420–520; it reads TPCPCKCRDK…FSDTPFVAST (101 aa). 2 disordered regions span residues 437-458 and 498-520; these read QSNA…AEDR and SRAK…VAST.

The protein belongs to the immunoglobulin superfamily. AMIGO family. Binds itself as well as AMIGO1 and AMIGO3. As to expression, highest levels in the lung. High levels in cerebellar granule neurons and Purkinje cells. Also in pyramidal cells between CA1 and CA3 regions of the hippocampus and granule cells of the dentate gyrus.

It is found in the cell membrane. The protein localises to the nucleus. In terms of biological role, required for depolarization-dependent survival of cultured cerebellar granule neurons. May mediate homophilic as well as heterophilic cell-cell interaction with AMIGO1 or AMIGO3. May contribute to signal transduction through its intracellular domain. This is Amphoterin-induced protein 2 from Rattus norvegicus (Rat).